The sequence spans 320 residues: Sensor histidine kinase YbdK (320 aa).

Residues 1–21 form a helical membrane-spanning segment; that stretch reads MLLFTAVISVPMLLLAVSVLM. Residues 22-41 lie on the Extracellular side of the membrane; that stretch reads SVIYDSMFKPMNHGMPFHRS. The helical transmembrane segment at 42 to 62 threads the bilayer; sequence FAYPAMIVVFLISLLLLAFLF. Residues 63-320 lie on the Cytoplasmic side of the membrane; sequence SKSIHSLLHK…NGTGFLFSKE (258 aa). The HAMP domain occupies 67–120; the sequence is HSLLHKINLLNQTIRHLASDQRVPDKIEVKRADEIGELIKSVNLLIERTTYREL. The Histidine kinase domain maps to 135 to 320; the sequence is KLRHDINTPL…NGTGFLFSKE (186 aa). A Phosphohistidine; by autocatalysis modification is found at H138.

Its subcellular location is the cell membrane. The catalysed reaction is ATP + protein L-histidine = ADP + protein N-phospho-L-histidine.. Its function is as follows. Member of the two-component regulatory system YbdK/YbdJ. Probably activates YbdJ by phosphorylation. The polypeptide is Sensor histidine kinase YbdK (ybdK) (Bacillus subtilis (strain 168)).